The following is a 499-amino-acid chain: MIDRGALMSRYSRASDPDIRSVFHREFEGNQKRSEDFYRRIFLEYGDESIAELVTAQVGIQNVSNVISKVIEEIRIGLSYLEKSTRYVAYDRKVDGHYLFMQAEKIGLSGEAAREYTDLCNRLFDLYSSTLPRIEEEISRQWPIESFDFNIDGNPRNYKELDENGRKLAQKSYRSSVRSRALDDARFILPASTLTNMGVSGNGRSFIHLIQKLMEYGVPESERLAHDLYEELKGEFPQIIDDALSQHGQDIINYKRSLASLFPYTDGGRFEKVRLIKYSNEREEMQKVLALLMYPFAEDASGIISRIKAMELSEASAILERIRDLRKNRRMKVGRPFEAVNYVFEVTTNYGAFRDLQRHRFLSIVRKPLTVSYGFDVPPIIAKMPDLSEEYAEAMKDAERVYRIIKERYGAWIAQYAVPFAYRYPVVFTTNLAEATYFIELRSTPQAHFDLRDIAIRMYNEIKSVHPSLAGIIKFVDTGDYPLGRLSAEVRKNVKAGGI.

2 ThyX domains span residues 1–246 (MIDR…ALSQ) and 271–476 (EKVR…IKFV).

Belongs to the UPF0159 family.

The sequence is that of UPF0159 protein Ta1429 from Thermoplasma acidophilum (strain ATCC 25905 / DSM 1728 / JCM 9062 / NBRC 15155 / AMRC-C165).